An 880-amino-acid polypeptide reads, in one-letter code: Alanine--tRNA ligase (880 aa).

His-566, His-570, Cys-668, and His-672 together coordinate Zn(2+).

It belongs to the class-II aminoacyl-tRNA synthetase family. The cofactor is Zn(2+).

Its subcellular location is the cytoplasm. It carries out the reaction tRNA(Ala) + L-alanine + ATP = L-alanyl-tRNA(Ala) + AMP + diphosphate. Functionally, catalyzes the attachment of alanine to tRNA(Ala) in a two-step reaction: alanine is first activated by ATP to form Ala-AMP and then transferred to the acceptor end of tRNA(Ala). Also edits incorrectly charged Ser-tRNA(Ala) and Gly-tRNA(Ala) via its editing domain. The protein is Alanine--tRNA ligase of Parafrankia sp. (strain EAN1pec).